Reading from the N-terminus, the 79-residue chain is Acyl carrier protein (79 aa).

The 79-residue stretch at 1–79 (MTKEQILVDV…DVVSYIETQV (79 aa)) folds into the Carrier domain. Position 39 is an O-(pantetheine 4'-phosphoryl)serine (S39).

It belongs to the acyl carrier protein (ACP) family. In terms of processing, 4'-phosphopantetheine is transferred from CoA to a specific serine of apo-ACP by AcpS. This modification is essential for activity because fatty acids are bound in thioester linkage to the sulfhydryl of the prosthetic group.

It localises to the cytoplasm. Its pathway is lipid metabolism; fatty acid biosynthesis. Its function is as follows. Carrier of the growing fatty acid chain in fatty acid biosynthesis. The sequence is that of Acyl carrier protein from Exiguobacterium sibiricum (strain DSM 17290 / CCUG 55495 / CIP 109462 / JCM 13490 / 255-15).